The following is a 313-amino-acid chain: Acetaldehyde dehydrogenase 3 (313 aa).

Serine 11–isoleucine 14 contacts NAD(+). Catalysis depends on cysteine 129, which acts as the Acyl-thioester intermediate. NAD(+) contacts are provided by residues serine 160–asparagine 168 and asparagine 288.

This sequence belongs to the acetaldehyde dehydrogenase family.

The enzyme catalyses acetaldehyde + NAD(+) + CoA = acetyl-CoA + NADH + H(+). The chain is Acetaldehyde dehydrogenase 3 from Rhizorhabdus wittichii (strain DSM 6014 / CCUG 31198 / JCM 15750 / NBRC 105917 / EY 4224 / RW1) (Sphingomonas wittichii).